A 205-amino-acid chain; its full sequence is Large ribosomal subunit protein uL4 (205 aa).

It belongs to the universal ribosomal protein uL4 family. In terms of assembly, part of the 50S ribosomal subunit.

In terms of biological role, one of the primary rRNA binding proteins, this protein initially binds near the 5'-end of the 23S rRNA. It is important during the early stages of 50S assembly. It makes multiple contacts with different domains of the 23S rRNA in the assembled 50S subunit and ribosome. Its function is as follows. Forms part of the polypeptide exit tunnel. This is Large ribosomal subunit protein uL4 from Roseobacter denitrificans (strain ATCC 33942 / OCh 114) (Erythrobacter sp. (strain OCh 114)).